Reading from the N-terminus, the 187-residue chain is UPF0301 protein Sala_0165 (187 aa).

It belongs to the UPF0301 (AlgH) family.

The protein is UPF0301 protein Sala_0165 of Sphingopyxis alaskensis (strain DSM 13593 / LMG 18877 / RB2256) (Sphingomonas alaskensis).